The following is a 110-amino-acid chain: Small ribosomal subunit protein bS6 (110 aa).

The protein belongs to the bacterial ribosomal protein bS6 family.

Binds together with bS18 to 16S ribosomal RNA. The polypeptide is Small ribosomal subunit protein bS6 (rpsF) (Aquifex aeolicus (strain VF5)).